We begin with the raw amino-acid sequence, 104 residues long: L-rhamnose mutarotase (104 aa).

Tyr18 provides a ligand contact to substrate. The active-site Proton donor is the His22. Substrate is bound by residues Tyr41 and Trp76–Trp77.

It belongs to the rhamnose mutarotase family. Homodimer.

The protein resides in the cytoplasm. The catalysed reaction is alpha-L-rhamnose = beta-L-rhamnose. The protein operates within carbohydrate metabolism; L-rhamnose metabolism. Functionally, involved in the anomeric conversion of L-rhamnose. The polypeptide is L-rhamnose mutarotase (Sinorhizobium fredii (strain NBRC 101917 / NGR234)).